A 240-amino-acid chain; its full sequence is 1-(5-phosphoribosyl)-5-[(5-phosphoribosylamino)methylideneamino] imidazole-4-carboxamide isomerase (240 aa).

D8 functions as the Proton acceptor in the catalytic mechanism. The Proton donor role is filled by D129.

Belongs to the HisA/HisF family.

The protein resides in the cytoplasm. The enzyme catalyses 1-(5-phospho-beta-D-ribosyl)-5-[(5-phospho-beta-D-ribosylamino)methylideneamino]imidazole-4-carboxamide = 5-[(5-phospho-1-deoxy-D-ribulos-1-ylimino)methylamino]-1-(5-phospho-beta-D-ribosyl)imidazole-4-carboxamide. Its pathway is amino-acid biosynthesis; L-histidine biosynthesis; L-histidine from 5-phospho-alpha-D-ribose 1-diphosphate: step 4/9. In Caldanaerobacter subterraneus subsp. tengcongensis (strain DSM 15242 / JCM 11007 / NBRC 100824 / MB4) (Thermoanaerobacter tengcongensis), this protein is 1-(5-phosphoribosyl)-5-[(5-phosphoribosylamino)methylideneamino] imidazole-4-carboxamide isomerase.